Reading from the N-terminus, the 311-residue chain is Cadmium, cobalt and zinc/H(+)-K(+) antiporter (311 aa).

Over 1–12 the chain is Extracellular; sequence MGHNHNEGANKK. The chain crosses the membrane as a helical span at residues 13 to 33; the sequence is VLLISFIMITGYMIIEAIGGF. The Cytoplasmic segment spans residues 34-43; sequence LTNSLALLSD. Residues 44-64 traverse the membrane as a helical segment; that stretch reads AGHMLSDSISLMVALIAFTLA. Over 65 to 78 the chain is Extracellular; the sequence is EKKANHNKTFGYKR. The helical transmembrane segment at 79-99 threads the bilayer; sequence FEILAAVINGAALILISLYII. The Cytoplasmic segment spans residues 100-115; that stretch reads YEAIERFSNPPKVATT. Residues 116–136 form a helical membrane-spanning segment; sequence GMLTISIIGLVVNLLVAWIMM. The Extracellular portion of the chain corresponds to 137-157; that stretch reads SGGDTKNNLNIRGAYLHVISD. A helical membrane pass occupies residues 158-178; that stretch reads MLGSVGAILAAILIIFFGWGW. At 179–311 the chain is on the cytoplasmic side; the sequence is ADPLASIIVA…MEKQRDHHHH (133 aa).

This sequence belongs to the cation diffusion facilitator (CDF) transporter (TC 2.A.4) family. SLC30A subfamily.

It is found in the cell membrane. Functionally, involved in divalent cation and potassium homeostasis in the cell. Catalyzes the active efflux of zinc, cadmium and cobalt, in exchange for potassium and H(+) ions. This Bacillus subtilis (strain 168) protein is Cadmium, cobalt and zinc/H(+)-K(+) antiporter (czcD).